Here is a 255-residue protein sequence, read N- to C-terminus: Keratin-associated protein 10-2 (255 aa).

22 consecutive repeat copies span residues 26–30 (CCELP), 36–40 (CCAPA), 57–61 (CCQAA), 79–83 (CCQQS), 89–93 (CCTSS), 99–103 (CCVPV), 104–108 (CCKPV), 109–113 (CCVPV), 114–118 (CCGAS), 120–124 (CCQQS), 130–134 (CCASS), 145–149 (CCKAV), 150–154 (CCVPT), 162–166 (CCQQS), 172–176 (CCTSS), 182–186 (CCVSV), 187–191 (CCKPV), 192–196 (CCKSI), 197–201 (CCVPV), 209–213 (CCQQS), 219–223 (CCTSS), and 224–228 (CCRPS). Residues 26–228 (CCELPCGTPS…CCTSSCCRPS (203 aa)) are 22 X 5 AA repeats of C-C-X(3).

This sequence belongs to the KRTAP type 10 family. Interacts with hair keratins. Restricted to a narrow region of the hair fiber cuticle, lying approximately 20 cell layers above the apex of the dermal papilla of the hair root; not detected in any other tissues.

In terms of biological role, in the hair cortex, hair keratin intermediate filaments are embedded in an interfilamentous matrix, consisting of hair keratin-associated proteins (KRTAP), which are essential for the formation of a rigid and resistant hair shaft through their extensive disulfide bond cross-linking with abundant cysteine residues of hair keratins. The matrix proteins include the high-sulfur and high-glycine-tyrosine keratins. The protein is Keratin-associated protein 10-2 (KRTAP10-2) of Homo sapiens (Human).